The sequence spans 291 residues: uncharacterized protein (291 aa).

10 helical membrane passes run 1-21 (MHNL…LKIA), 26-46 (IIIE…SYFL), 67-87 (PIFL…SKAV), 95-115 (SDAA…LIFH), 117-137 (TLSQ…FCLL), 149-169 (FKGV…DILF), 179-199 (FPAT…IYLF), 208-228 (SSVI…LFYI), 241-261 (VFAG…ALVF), and 270-290 (WLGI…DKII). In terms of domain architecture, EamA spans 107–138 (ILAAFLIFHETLSQSKIIGVVLAFIGLFCLLT).

It localises to the cell membrane. This is an uncharacterized protein from Haemophilus influenzae (strain ATCC 51907 / DSM 11121 / KW20 / Rd).